The sequence spans 782 residues: LPS-assembly protein LptD (782 aa).

Residues 1–23 form the signal peptide; it reads MNKKHTLISLAILTALYSQQSLA.

The protein belongs to the LptD family. As to quaternary structure, component of the lipopolysaccharide transport and assembly complex. Interacts with LptE and LptA.

Its subcellular location is the cell outer membrane. Together with LptE, is involved in the assembly of lipopolysaccharide (LPS) at the surface of the outer membrane. The polypeptide is LPS-assembly protein LptD (Haemophilus influenzae (strain 86-028NP)).